Here is a 500-residue protein sequence, read N- to C-terminus: MLNINFVNEESSTNQGLIVFIDEQLKFDTSLMALDQQHYGLISKTIQNKLQFRGNYGQITIVPSVIKSGEVKYLIIVGLGNAEKLTEAKIEELGGKILQHATCAKISTIGLKIMSRINRFTPQTFTSLIASGAFLASYRFHKYKTTLKEVEKFAVESIEIFTDNNSEAIKLFEVKKLIAEAVFFTRDISNEPSNIKTPQVYAERIVDILEPLGVNVDVIGERDIKNLGMGALLGVGQGSQNESKLVVMEYKGGSRDDSTIALVGKGVIFDTGGISLKPSSNMHLMRYDMAGSAAVVGAIIALASQKATVNVVGVVGLVENMQSGNAQRPGDVVVTMSGQTAEVLNTDAEGRLVLADTVWYVQEKFNPKCVIDVATLTGAITVALGSTYAGCFSNNDELADKLIKAGEEVNEKLWRMPLHDDYDAMINSDIADIANIGNVPGAAGSCTAAHFIKRFIKDGVDWAHLDIAGVANSNNASALGPKGAVGYGVRLLEKFIKEYN.

2 residues coordinate Mn(2+): K265 and D270. K277 is an active-site residue. The Mn(2+) site is built by D288, D347, and E349. The active site involves R351.

Belongs to the peptidase M17 family. Mn(2+) serves as cofactor.

It localises to the cytoplasm. The catalysed reaction is Release of an N-terminal amino acid, Xaa-|-Yaa-, in which Xaa is preferably Leu, but may be other amino acids including Pro although not Arg or Lys, and Yaa may be Pro. Amino acid amides and methyl esters are also readily hydrolyzed, but rates on arylamides are exceedingly low.. The enzyme catalyses Release of an N-terminal amino acid, preferentially leucine, but not glutamic or aspartic acids.. Functionally, presumably involved in the processing and regular turnover of intracellular proteins. Catalyzes the removal of unsubstituted N-terminal amino acids from various peptides. The sequence is that of Probable cytosol aminopeptidase from Rickettsia typhi (strain ATCC VR-144 / Wilmington).